Here is a 508-residue protein sequence, read N- to C-terminus: Methionine--tRNA ligase (508 aa).

Residues 12 to 22 carry the 'HIGH' region motif; that stretch reads YYVNDIPHIGH. Positions 295-299 match the 'KMSKS' region motif; it reads KISKS. ATP is bound at residue Lys298.

Belongs to the class-I aminoacyl-tRNA synthetase family. MetG type 2B subfamily. As to quaternary structure, monomer.

It is found in the cytoplasm. The enzyme catalyses tRNA(Met) + L-methionine + ATP = L-methionyl-tRNA(Met) + AMP + diphosphate. Functionally, is required not only for elongation of protein synthesis but also for the initiation of all mRNA translation through initiator tRNA(fMet) aminoacylation. This chain is Methionine--tRNA ligase, found in Rickettsia conorii (strain ATCC VR-613 / Malish 7).